We begin with the raw amino-acid sequence, 88 residues long: DNA-directed RNA polymerase subunit omega (88 aa).

The protein belongs to the RNA polymerase subunit omega family. The RNAP catalytic core consists of 2 alpha, 1 beta, 1 beta' and 1 omega subunit. When a sigma factor is associated with the core the holoenzyme is formed, which can initiate transcription.

It carries out the reaction RNA(n) + a ribonucleoside 5'-triphosphate = RNA(n+1) + diphosphate. Promotes RNA polymerase assembly. Latches the N- and C-terminal regions of the beta' subunit thereby facilitating its interaction with the beta and alpha subunits. The polypeptide is DNA-directed RNA polymerase subunit omega (Salinispora arenicola (strain CNS-205)).